A 167-amino-acid polypeptide reads, in one-letter code: Telethonin (167 aa).

The residue at position 39 (Ser39) is a Phosphoserine. The disordered stretch occupies residues 144–167 (VPVSKPGALRRSLSRSMSQEAQRG). A compositionally biased stretch (polar residues) spans 157–167 (SRSMSQEAQRG).

In terms of assembly, interacts with MYOZ1, MYOZ2 and MYOZ3. Interacts with CSRP3. Interacts directly with the N-terminal Ig-like domains of 2 titin (TTN) molecules. Interacts with ANKRD2; the interaction is direct. Heart and skeletal muscle.

It localises to the cytoplasm. The protein localises to the myofibril. It is found in the sarcomere. Its function is as follows. Muscle assembly regulating factor. Mediates the antiparallel assembly of titin (TTN) molecules at the sarcomeric Z-disk. The chain is Telethonin (TCAP) from Homo sapiens (Human).